The chain runs to 100 residues: Biogenesis of lysosome-related organelles complex 1 subunit CNL1 (100 aa).

Residues Ser25–Val46 are a coiled coil.

It belongs to the BLOC1S4 family. In terms of assembly, component of the biogenesis of lysosome-related organelles complex-1 (BLOC-1).

It is found in the cytoplasm. Functionally, component of the biogenesis of lysosome-related organelles complex-1 (BLOC-1), a complex that is involved in endosomal cargo sorting. This is Biogenesis of lysosome-related organelles complex 1 subunit CNL1 (CLN1) from Candida glabrata (strain ATCC 2001 / BCRC 20586 / JCM 3761 / NBRC 0622 / NRRL Y-65 / CBS 138) (Yeast).